A 113-amino-acid chain; its full sequence is Large ribosomal subunit protein P1 (113 aa).

A compositionally biased stretch (low complexity) spans 56–66 (TAAAAPAPAAG). A disordered region spans residues 56–113 (TAAAAPAPAAGGSAGGEVEAADDDDEEDAEEEAADEGGDDDGDDDEEADGEGLGALFG). Acidic residues predominate over residues 74-105 (EAADDDDEEDAEEEAADEGGDDDGDDDEEADG).

Belongs to the eukaryotic ribosomal protein P1/P2 family. Part of the 50S ribosomal subunit. Homodimer, it forms part of the ribosomal stalk which helps the ribosome interact with GTP-bound translation factors. Forms a heptameric uL10/P0(P1)2(P1)2(P1)2 complex, where uL10/P0 forms an elongated spine to which the P1 dimers bind in a sequential fashion.

Functionally, forms part of the ribosomal stalk, playing a central role in the interaction of the ribosome with GTP-bound translation factors. In Haloferax volcanii (strain ATCC 29605 / DSM 3757 / JCM 8879 / NBRC 14742 / NCIMB 2012 / VKM B-1768 / DS2) (Halobacterium volcanii), this protein is Large ribosomal subunit protein P1.